The primary structure comprises 378 residues: Ribosomal RNA large subunit methyltransferase G (378 aa).

This sequence belongs to the methyltransferase superfamily. RlmG family.

The protein resides in the cytoplasm. It catalyses the reaction guanosine(1835) in 23S rRNA + S-adenosyl-L-methionine = N(2)-methylguanosine(1835) in 23S rRNA + S-adenosyl-L-homocysteine + H(+). Specifically methylates the guanine in position 1835 (m2G1835) of 23S rRNA. In Shigella flexneri serotype 5b (strain 8401), this protein is Ribosomal RNA large subunit methyltransferase G.